A 1887-amino-acid chain; its full sequence is Protein TIC 214 (1887 aa).

A run of 6 helical transmembrane segments spans residues 18–38 (IINSVVVVGLYYGFLTTFSIG), 64–84 (FITGQLMMFISIYYAPLHLAL), 87–107 (PHTITVLALPYLLFHFFWNNH), 124–144 (LSIQCVFLNNLIFQLFNHFIL), 172–192 (VGWLIGHILFMKWLGLVLVWI), and 221–241 (IFSILLFITCVYYLGRIPSPI). Disordered regions lie at residues 248-300 (EASK…EGWD), 785-805 (REEQTKREEKKEKDKKEDNKR), and 1569-1603 (LPSNKKIKNRSQETKEPPSQRERGSDIENKGNLSP). The span at 256–268 (VESEEERDVEIET) shows a compositional bias: acidic residues. The segment covering 1578–1597 (RSQETKEPPSQRERGSDIEN) has biased composition (basic and acidic residues).

This sequence belongs to the TIC214 family. As to quaternary structure, part of the Tic complex.

The protein localises to the plastid. It localises to the chloroplast inner membrane. In terms of biological role, involved in protein precursor import into chloroplasts. May be part of an intermediate translocation complex acting as a protein-conducting channel at the inner envelope. In Solanum tuberosum (Potato), this protein is Protein TIC 214.